We begin with the raw amino-acid sequence, 664 residues long: Tripartite terminase subunit 1 (664 aa).

A C3H1-type zinc finger spans residues 205–233 (CHVCFEELCVTANQGATASRRLAGKICDH). 2 disordered regions span residues 273–295 (SKMT…AQER) and 440–466 (HAAE…GGPE). The span at 281–292 (GGPAEAPGPAAA) shows a compositional bias: low complexity.

This sequence belongs to the herpesviridae TRM1 protein family. As to quaternary structure, associates with TRM2 and TRM3 to form the tripartite terminase complex. Interacts with portal protein.

The protein resides in the host nucleus. Functionally, component of the molecular motor that translocates viral genomic DNA in empty capsid during DNA packaging. Forms a tripartite terminase complex together with TRM2 and TRM3 in the host cytoplasm. Once the complex reaches the host nucleus, it interacts with the capsid portal vertex. This portal forms a ring in which genomic DNA is translocated into the capsid. TRM1 carries an endonuclease activity that plays an important role for the cleavage of concatemeric viral DNA into unit length genomes. The polypeptide is Tripartite terminase subunit 1 (Bos taurus (Bovine)).